A 433-amino-acid polypeptide reads, in one-letter code: Enolase (433 aa).

An N-acetylserine modification is found at Ser1. 2 residues coordinate (2R)-2-phosphoglycerate: Ser36 and His157. Glu209 serves as the catalytic Proton donor. Residues Asp244, Glu294, and Asp319 each contribute to the Mn(2+) site. Positions 344, 373, and 374 each coordinate (2R)-2-phosphoglycerate. Catalysis depends on Lys344, which acts as the Proton acceptor.

This sequence belongs to the enolase family. In terms of assembly, homodimer. The cofactor is Mg(2+).

It is found in the cytoplasm. It catalyses the reaction (2R)-2-phosphoglycerate = phosphoenolpyruvate + H2O. Its pathway is carbohydrate degradation; glycolysis; pyruvate from D-glyceraldehyde 3-phosphate: step 4/5. Its activity is regulated as follows. Inhibited by 2-phosphoglycolic acid. The chain is Enolase from Homarus gammarus (European lobster).